Consider the following 130-residue polypeptide: S-adenosylmethionine decarboxylase proenzyme (130 aa).

The active-site Schiff-base intermediate with substrate; via pyruvic acid is the S64. At S64 the chain carries Pyruvic acid (Ser); by autocatalysis. Residue H69 is the Proton acceptor; for processing activity of the active site. The active-site Proton donor; for catalytic activity is the C84.

The protein belongs to the prokaryotic AdoMetDC family. Type 1 subfamily. Heterotetramer of two alpha and two beta chains arranged as a dimer of alpha/beta heterodimers. Pyruvate is required as a cofactor. Post-translationally, is synthesized initially as an inactive proenzyme. Formation of the active enzyme involves a self-maturation process in which the active site pyruvoyl group is generated from an internal serine residue via an autocatalytic post-translational modification. Two non-identical subunits are generated from the proenzyme in this reaction, and the pyruvate is formed at the N-terminus of the alpha chain, which is derived from the carboxyl end of the proenzyme. The post-translation cleavage follows an unusual pathway, termed non-hydrolytic serinolysis, in which the side chain hydroxyl group of the serine supplies its oxygen atom to form the C-terminus of the beta chain, while the remainder of the serine residue undergoes an oxidative deamination to produce ammonia and the pyruvoyl group blocking the N-terminus of the alpha chain.

The enzyme catalyses S-adenosyl-L-methionine + H(+) = S-adenosyl 3-(methylsulfanyl)propylamine + CO2. Its pathway is amine and polyamine biosynthesis; S-adenosylmethioninamine biosynthesis; S-adenosylmethioninamine from S-adenosyl-L-methionine: step 1/1. In terms of biological role, catalyzes the decarboxylation of S-adenosylmethionine to S-adenosylmethioninamine (dcAdoMet), the propylamine donor required for the synthesis of the polyamines spermine and spermidine from the diamine putrescine. The sequence is that of S-adenosylmethionine decarboxylase proenzyme from Picrophilus torridus (strain ATCC 700027 / DSM 9790 / JCM 10055 / NBRC 100828 / KAW 2/3).